The following is a 330-amino-acid chain: uncharacterized protein (330 aa).

H257 is a catalytic residue.

This sequence belongs to the IUNH family.

This is an uncharacterized protein from Schizosaccharomyces pombe (strain 972 / ATCC 24843) (Fission yeast).